The following is a 422-amino-acid chain: Aminopentol aminotransferase (422 aa).

Lys-258 carries the N6-(pyridoxal phosphate)lysine modification.

Belongs to the class-III pyridoxal-phosphate-dependent aminotransferase family. The cofactor is pyridoxal 5'-phosphate.

The protein resides in the cytoplasm. The catalysed reaction is (2S,3S,5R,10R,12S,14S,15R,16R)-2-amino-12,16-dimethylicosane-3,5,10,14,15-pentol + pyruvate = (3S,5R,10R,12S,14S,15R,16R)-3,5,10,14,15-pentahydroxy-12,16-dimethylicosan-2-one + L-alanine. In terms of biological role, involved in degradation of fumonisin B1. Catalyzes the deamination of aminopentol (HFB1) to 2-keto-HFB1. Pyruvate is the preferred cosubstrate, but it can also use several other alpha-keto acids as amino group acceptors. The protein is Aminopentol aminotransferase (fumI) of Sphingopyxis macrogoltabida (Sphingomonas macrogoltabidus).